The chain runs to 727 residues: Glycerol-3-phosphate dehydrogenase, mitochondrial (727 aa).

Residues 1 to 42 constitute a mitochondrion transit peptide; the sequence is MAFQKAVKRTVLVCGGALATVLGLSQCSHYRRKQVNLACLKA. An FAD-binding site is contributed by 71–99; that stretch reads DILVIGGGATGSGCALDAVTRGLKTALVE. Tyr601 is subject to Phosphotyrosine. EF-hand domains are found at residues 623–658 and 659–694; these read SDIERYTKRFHKFDADEKGFITIVDVQRVLENINVK and IDENTLHEILSEVDLNKNGQVELNEFLQLMSAIQKG. The Ca(2+) site is built by Asp672, Asn674, Asn676, Gln678, and Glu683.

Belongs to the FAD-dependent glycerol-3-phosphate dehydrogenase family. FAD is required as a cofactor.

The protein resides in the mitochondrion. The enzyme catalyses a quinone + sn-glycerol 3-phosphate = dihydroxyacetone phosphate + a quinol. Its pathway is polyol metabolism; glycerol degradation via glycerol kinase pathway; glycerone phosphate from sn-glycerol 3-phosphate (aerobic route): step 1/1. Calcium-binding enhance the activity of the enzyme. In terms of biological role, calcium-responsive mitochondrial glycerol-3-phosphate dehydrogenase which seems to be a key component of the pancreatic beta-cell glucose-sensing device. This chain is Glycerol-3-phosphate dehydrogenase, mitochondrial (GPD2), found in Mesocricetus auratus (Golden hamster).